The sequence spans 367 residues: C-glycoside deglycosidase alpha subunit (367 aa).

E146 contacts Mg(2+). The active-site Proton acceptor is H148. Residues D178, H276, and E312 each coordinate Mg(2+).

It belongs to the C-glycoside deglycosidase alpha subunit family. Heterodimer composed of an alpha subunit (CarB1) and a beta subunit (CarC1). It depends on Mg(2+) as a cofactor.

It carries out the reaction 3''-dehydroisovitexin = 1,5-anhydro-D-erythro-hex-1-en-3-ulose + apigenin. With respect to regulation, activity is strongly reduced in the presence of chelating agents. Carbon-carbon bond-cleaving enzyme which participates in the metabolism of C-glycosides. Acts on the C6-glycosylated compound 3''-dehydroisovitexin (3''-oxo-isovitexin). Shows weak activity with 3''-dehydroisoorientin (3''-oxo-homoorientin) and 3'-dehydromangiferin (3'-oxo-mangiferin). This chain is C-glycoside deglycosidase alpha subunit, found in Arthrobacter globiformis (strain ATCC 8010 / DSM 20124 / JCM 1332 / NBRC 12137 / NCIMB 8907 / NRRL B-2979 / 168).